Consider the following 96-residue polypeptide: Co-chaperonin GroES (96 aa).

The protein belongs to the GroES chaperonin family. As to quaternary structure, heptamer of 7 subunits arranged in a ring. Interacts with the chaperonin GroEL.

Its subcellular location is the cytoplasm. In terms of biological role, together with the chaperonin GroEL, plays an essential role in assisting protein folding. The GroEL-GroES system forms a nano-cage that allows encapsulation of the non-native substrate proteins and provides a physical environment optimized to promote and accelerate protein folding. GroES binds to the apical surface of the GroEL ring, thereby capping the opening of the GroEL channel. The chain is Co-chaperonin GroES from Geotalea uraniireducens (strain Rf4) (Geobacter uraniireducens).